The sequence spans 545 residues: Chaperonin GroEL (545 aa).

ATP is bound by residues 30–33 (TLGP), K51, 87–91 (DGTTT), G415, 479–481 (NAA), and D495.

This sequence belongs to the chaperonin (HSP60) family. In terms of assembly, forms a cylinder of 14 subunits composed of two heptameric rings stacked back-to-back. Interacts with the co-chaperonin GroES.

The protein localises to the cytoplasm. It catalyses the reaction ATP + H2O + a folded polypeptide = ADP + phosphate + an unfolded polypeptide.. In terms of biological role, together with its co-chaperonin GroES, plays an essential role in assisting protein folding. The GroEL-GroES system forms a nano-cage that allows encapsulation of the non-native substrate proteins and provides a physical environment optimized to promote and accelerate protein folding. The chain is Chaperonin GroEL from Salmonella agona (strain SL483).